Consider the following 423-residue polypeptide: Divalent metal cation transporter MntH (423 aa).

The next 11 membrane-spanning stretches (helical) occupy residues 31-51 (LMML…GNFA), 58-78 (SSFG…AMLI), 116-136 (IIAI…FQLV), 137-157 (FGIS…MILI), 168-188 (VVIG…LFFA), 213-233 (AAGI…SALF), 254-274 (IAMV…AAVF), 302-322 (VLFG…GTMA), 342-362 (FITM…TDIL), 363-383 (VMSQ…LLIF), and 401-421 (YAGV…MVTL).

This sequence belongs to the NRAMP family.

It is found in the cell inner membrane. In terms of biological role, h(+)-stimulated, divalent metal cation uptake system. This is Divalent metal cation transporter MntH from Vibrio campbellii (strain ATCC BAA-1116).